The following is a 293-amino-acid chain: Heterogeneous nuclear ribonucleoprotein D-like-A (293 aa).

A disordered region spans residues 1–21 (MAGFGAAPDFNEGSKINASKN). RRM domains are found at residues 26–108 (GKMF…KGKE) and 111–188 (KKVF…AAQP). Disordered regions lie at residues 193–224 (RQQQ…GWNQ) and 274–293 (QSTY…YQPY). Residues 202–222 (GGRGAVTGRGGTRGRGRGQGW) are compositionally biased toward gly residues.

The protein localises to the nucleus. The protein resides in the cytoplasm. Acts as a transcriptional regulator. Binds DNA and RNA. This chain is Heterogeneous nuclear ribonucleoprotein D-like-A (hnrnpdl-a), found in Xenopus laevis (African clawed frog).